A 204-amino-acid polypeptide reads, in one-letter code: ATP phosphoribosyltransferase (204 aa).

This sequence belongs to the ATP phosphoribosyltransferase family. Short subfamily. As to quaternary structure, heteromultimer composed of HisG and HisZ subunits.

The protein localises to the cytoplasm. It carries out the reaction 1-(5-phospho-beta-D-ribosyl)-ATP + diphosphate = 5-phospho-alpha-D-ribose 1-diphosphate + ATP. It functions in the pathway amino-acid biosynthesis; L-histidine biosynthesis; L-histidine from 5-phospho-alpha-D-ribose 1-diphosphate: step 1/9. In terms of biological role, catalyzes the condensation of ATP and 5-phosphoribose 1-diphosphate to form N'-(5'-phosphoribosyl)-ATP (PR-ATP). Has a crucial role in the pathway because the rate of histidine biosynthesis seems to be controlled primarily by regulation of HisG enzymatic activity. The protein is ATP phosphoribosyltransferase of Campylobacter concisus (strain 13826).